We begin with the raw amino-acid sequence, 415 residues long: Serine hydroxymethyltransferase (415 aa).

(6S)-5,6,7,8-tetrahydrofolate-binding positions include Leu-121 and 125–127; that span reads GHL. Lys-230 carries the post-translational modification N6-(pyridoxal phosphate)lysine. A (6S)-5,6,7,8-tetrahydrofolate-binding site is contributed by 355 to 357; the sequence is SPF.

The protein belongs to the SHMT family. In terms of assembly, homodimer. The cofactor is pyridoxal 5'-phosphate.

The protein resides in the cytoplasm. It carries out the reaction (6R)-5,10-methylene-5,6,7,8-tetrahydrofolate + glycine + H2O = (6S)-5,6,7,8-tetrahydrofolate + L-serine. It functions in the pathway one-carbon metabolism; tetrahydrofolate interconversion. It participates in amino-acid biosynthesis; glycine biosynthesis; glycine from L-serine: step 1/1. Functionally, catalyzes the reversible interconversion of serine and glycine with tetrahydrofolate (THF) serving as the one-carbon carrier. This reaction serves as the major source of one-carbon groups required for the biosynthesis of purines, thymidylate, methionine, and other important biomolecules. Also exhibits THF-independent aldolase activity toward beta-hydroxyamino acids, producing glycine and aldehydes, via a retro-aldol mechanism. The protein is Serine hydroxymethyltransferase of Lactococcus lactis subsp. cremoris (strain MG1363).